We begin with the raw amino-acid sequence, 250 residues long: 2,3-bisphosphoglycerate-dependent phosphoglycerate mutase (250 aa).

Substrate contacts are provided by residues 10–17 (RHGESEWN), 23–24 (TG), Arg-62, 89–92 (ERHY), Lys-100, 116–117 (RR), and 185–186 (GN). The active-site Tele-phosphohistidine intermediate is the His-11. The active-site Proton donor/acceptor is the Glu-89.

Belongs to the phosphoglycerate mutase family. BPG-dependent PGAM subfamily. In terms of assembly, homodimer.

It carries out the reaction (2R)-2-phosphoglycerate = (2R)-3-phosphoglycerate. It functions in the pathway carbohydrate degradation; glycolysis; pyruvate from D-glyceraldehyde 3-phosphate: step 3/5. Catalyzes the interconversion of 2-phosphoglycerate and 3-phosphoglycerate. The protein is 2,3-bisphosphoglycerate-dependent phosphoglycerate mutase of Edwardsiella ictaluri (strain 93-146).